Reading from the N-terminus, the 176-residue chain is Adenine phosphoribosyltransferase (176 aa).

Belongs to the purine/pyrimidine phosphoribosyltransferase family. As to quaternary structure, homodimer.

Its subcellular location is the cytoplasm. The enzyme catalyses AMP + diphosphate = 5-phospho-alpha-D-ribose 1-diphosphate + adenine. The protein operates within purine metabolism; AMP biosynthesis via salvage pathway; AMP from adenine: step 1/1. Its function is as follows. Catalyzes a salvage reaction resulting in the formation of AMP, that is energically less costly than de novo synthesis. The polypeptide is Adenine phosphoribosyltransferase (Borreliella burgdorferi (strain ZS7) (Borrelia burgdorferi)).